A 957-amino-acid polypeptide reads, in one-letter code: SLIT and NTRK-like protein 5 (957 aa).

An N-terminal signal peptide occupies residues Met1–Thr40. Topologically, residues Ile41 to Ser664 are extracellular. LRR repeat units follow at residues Pro82–Asn103, Gly106–Gly127, Gly130–Gly151, Asn154–Lys175, Met178–Phe199, and Pro201–Gln222. Asn103 carries an N-linked (GlcNAc...) asparagine glycan. In terms of domain architecture, LRRCT 1 spans Asn235–Arg286. The tract at residues Ala317–Tyr358 is disordered. The region spanning Gln365–Lys407 is the LRRNT domain. LRR repeat units lie at residues Asn410–Glu431, Gly434–Asp455, Asn458–Gly479, Ser482–Pro503, Asn506–Gly527, and Thr529–Asp550. Residues Asn563–Asp614 enclose the LRRCT 2 domain. A compositionally biased stretch (low complexity) spans Pro623–Ser632. Residues Pro623–Arg642 form a disordered region. Residue Asn644 is glycosylated (N-linked (GlcNAc...) asparagine). A helical membrane pass occupies residues Val665–Phe685. Residues Val686–Phe957 are Cytoplasmic-facing. Residues Ser789 to Leu844 form a disordered region. Over residues Gln796 to Gln811 the composition is skewed to pro residues.

The protein belongs to the SLITRK family. In the adult, significant expression is detected only in the brain. In the embryo, expressed in the subventricular zone, cortical plate, pyramidal layer of hippocampus, thalamus and hypothalamus.

It localises to the membrane. Its function is as follows. Suppresses neurite outgrowth. The polypeptide is SLIT and NTRK-like protein 5 (Slitrk5) (Mus musculus (Mouse)).